Here is a 331-residue protein sequence, read N- to C-terminus: NAD-dependent protein deacetylase HST2 (331 aa).

Residues 1–262 (MPSLDDILKP…EKLCTLLGLD (262 aa)) enclose the Deacetylase sirtuin-type domain. Residues 26–46 (GAGI…TGLY) and 109–112 (QNID) contribute to the NAD(+) site. His-129 serves as the catalytic Proton acceptor. The Zn(2+) site is built by Cys-137, Cys-140, Cys-161, and Cys-164. Residues 201-203 (GTS), 226-228 (NKE), and Cys-248 contribute to the NAD(+) site. The stretch at 276–331 (YSKAETKETKMHEIEDKLKEEAHLKEDKHTTKVDKKEKQNDANDKELEQLIDKLKI) forms a coiled coil. Residues 283–319 (ETKMHEIEDKLKEEAHLKEDKHTTKVDKKEKQNDAND) form a disordered region.

This sequence belongs to the sirtuin family. Class I subfamily. Zn(2+) is required as a cofactor.

It is found in the cytoplasm. It localises to the nucleus. It carries out the reaction N(6)-acetyl-L-lysyl-[protein] + NAD(+) + H2O = 2''-O-acetyl-ADP-D-ribose + nicotinamide + L-lysyl-[protein]. Its function is as follows. NAD-dependent histone deacetylase that is involved in nuclear silencing events. Derepresses subtelomeric silencing and increases repression in nucleolar (rDNA) silencing. Its function is negatively regulated by active nuclear export. The protein is NAD-dependent protein deacetylase HST2 (HST2) of Candida albicans (strain SC5314 / ATCC MYA-2876) (Yeast).